The chain runs to 218 residues: Albicidin resistance protein (218 aa).

It is found in the periplasm. Its function is as follows. Albicidin resistance protein binds to form a complex without antibiotic activity but without catalyzing any further chemical modifications to albicidin. The sequence is that of Albicidin resistance protein from Klebsiella oxytoca.